Here is a 599-residue protein sequence, read N- to C-terminus: Sulfite reductase [NADPH] flavoprotein alpha-component (599 aa).

The Flavodoxin-like domain occupies Ile64–Val202. Residues Ser70–Ala75, Ser117–Gly120, and Leu153–Cys162 each bind FMN. The region spanning Asp234–Pro448 is the FAD-binding FR-type domain. Residues Thr322, Ala356, Arg386–Ser389, Thr404–Gly406, Tyr410, and Gly419–Ser422 contribute to the FAD site. NADP(+) is bound by residues Ser519 to Arg520, Lys525 to Gln529, and Asp561. Tyr599 serves as a coordination point for FAD.

Belongs to the NADPH-dependent sulphite reductase flavoprotein subunit CysJ family. This sequence in the N-terminal section; belongs to the flavodoxin family. The protein in the C-terminal section; belongs to the flavoprotein pyridine nucleotide cytochrome reductase family. In terms of assembly, alpha(8)-beta(8). The alpha component is a flavoprotein, the beta component is a hemoprotein. FAD serves as cofactor. The cofactor is FMN.

It carries out the reaction hydrogen sulfide + 3 NADP(+) + 3 H2O = sulfite + 3 NADPH + 4 H(+). Its pathway is sulfur metabolism; hydrogen sulfide biosynthesis; hydrogen sulfide from sulfite (NADPH route): step 1/1. In terms of biological role, component of the sulfite reductase complex that catalyzes the 6-electron reduction of sulfite to sulfide. This is one of several activities required for the biosynthesis of L-cysteine from sulfate. The flavoprotein component catalyzes the electron flow from NADPH -&gt; FAD -&gt; FMN to the hemoprotein component. This chain is Sulfite reductase [NADPH] flavoprotein alpha-component, found in Shigella boydii serotype 4 (strain Sb227).